The chain runs to 1230 residues: Formin-like protein 14 (1230 aa).

In terms of domain architecture, Phosphatase tensin-type spans 1–194; it reads MSLLSRFFYK…QYVARRNINS (194 aa). Catalysis depends on C127, which acts as the Phosphocysteine intermediate. Residues 200 to 339 form the C2 tensin-type domain; that stretch reads ERALSLDCVI…FRAEVLFGEV (140 aa). 3 disordered regions span residues 412–432, 460–822, and 1187–1230; these read FNSPDSEEETNTSSAADSSDE, HESS…LKPL, and ENEK…RHRT. A compositionally biased stretch (low complexity) spans 484 to 496; sequence DNPLNLPSDPPSS. Composition is skewed to pro residues over residues 503-514, 524-535, 545-556, and 566-575; these read LPPPPPPPPPPL, SQPPPPPPPPPL, and SQPPPPPPLP. Over residues 579–591 the composition is skewed to polar residues; the sequence is NRDPLTTLHQPIN. Composition is skewed to pro residues over residues 592 to 630, 637 to 649, 660 to 672, 679 to 688, 699 to 711, 718 to 728, and 735 to 766; these read KTPPPPPPPPPPLPSRSIPPPLAQPPPPRPPPPPPPPPS, PSAPPPPPPPPPS, QPPPPPPPPPPTR, APPPPPPPPT, PSTPPPPPPPPPK, PKPPAPPPLPP, and APPPPPPPPLSKTPAPPPPPLSKTPVPPPPPG. The 399-residue stretch at 809–1207 folds into the FH2 domain; the sequence is VPTAAPKKTA…KLEKEAIKEK (399 aa). Basic and acidic residues predominate over residues 1187-1215; it reads ENEKQAEAEKKKLEKEAIKEKSATKKDGV.

This sequence belongs to the formin-like family. Class-II subfamily.

In Arabidopsis thaliana (Mouse-ear cress), this protein is Formin-like protein 14 (FH14).